A 262-amino-acid chain; its full sequence is Pyridoxine 5'-phosphate synthase (262 aa).

Asn-6 contacts 3-amino-2-oxopropyl phosphate. 8–9 (DH) provides a ligand contact to 1-deoxy-D-xylulose 5-phosphate. Residue Arg-17 participates in 3-amino-2-oxopropyl phosphate binding. Catalysis depends on His-43, which acts as the Proton acceptor. Residues Arg-45 and His-50 each contribute to the 1-deoxy-D-xylulose 5-phosphate site. The Proton acceptor role is filled by Glu-70. Thr-102 contacts 1-deoxy-D-xylulose 5-phosphate. The active-site Proton donor is His-215. Residues Gly-216 and 237 to 238 (GH) each bind 3-amino-2-oxopropyl phosphate.

The protein belongs to the PNP synthase family. In terms of assembly, homooctamer; tetramer of dimers.

It localises to the cytoplasm. It carries out the reaction 3-amino-2-oxopropyl phosphate + 1-deoxy-D-xylulose 5-phosphate = pyridoxine 5'-phosphate + phosphate + 2 H2O + H(+). It functions in the pathway cofactor biosynthesis; pyridoxine 5'-phosphate biosynthesis; pyridoxine 5'-phosphate from D-erythrose 4-phosphate: step 5/5. Functionally, catalyzes the complicated ring closure reaction between the two acyclic compounds 1-deoxy-D-xylulose-5-phosphate (DXP) and 3-amino-2-oxopropyl phosphate (1-amino-acetone-3-phosphate or AAP) to form pyridoxine 5'-phosphate (PNP) and inorganic phosphate. This chain is Pyridoxine 5'-phosphate synthase, found in Helicobacter pylori (strain J99 / ATCC 700824) (Campylobacter pylori J99).